Reading from the N-terminus, the 538-residue chain is Ubiquitin domain-containing protein DSK2a (538 aa).

Positions 18 to 93 (VAVNVRCSNG…VHMVRGFVPS (76 aa)) constitute a Ubiquitin-like domain. Positions 95 to 120 (PSAPAANAGNQTTAPQAVGSNDSSNL) are disordered. Residues 102–119 (AGNQTTAPQAVGSNDSSN) show a composition bias toward polar residues. STI1 domains follow at residues 138 to 179 (GNAM…QNLM) and 192 to 231 (NPQM…MREM). Positions 289 to 316 (QGVTTQGSDTSNNISAPNAETGTPNANP) are disordered. 2 STI1 domains span residues 357–394 (SPLG…MNQL) and 398–433 (NPQL…MQQM). The UBA domain occupies 491-535 (PPEERFATQLQQLQEMGFYDRAENIRALLATNGNVNAAVERLLGS).

Interacts with 'Lys-48'-linked polyubiquitin chains via its UBA domain. Interacts with RPN10 and RPN13. Interacts with PEX2 and PEX12. As to expression, ubiquitous with a strong expression level in inflorescence.

It is found in the nucleus. Its subcellular location is the cytoplasm. Binds and presumably selects ubiquitin-conjugates for destruction. Prefers multiubiquitin chains rather than single ubiquitins, with a binding affinity for 'Lys-48'-linked ubiquitin chains. Acts as a ubiquitin receptor that associates with the 26S proteasomal docking subunit RPN10 for the indirect recognition of ubiquitinated substrates of ubiquitin/26S proteasome-mediated proteolysis (UPP). This is Ubiquitin domain-containing protein DSK2a (DSK2A) from Arabidopsis thaliana (Mouse-ear cress).